The primary structure comprises 126 residues: Holo-[acyl-carrier-protein] synthase (126 aa).

2 residues coordinate Mg(2+): Asp9 and Glu58.

It belongs to the P-Pant transferase superfamily. AcpS family. Requires Mg(2+) as cofactor.

The protein resides in the cytoplasm. It carries out the reaction apo-[ACP] + CoA = holo-[ACP] + adenosine 3',5'-bisphosphate + H(+). Its function is as follows. Transfers the 4'-phosphopantetheine moiety from coenzyme A to a Ser of acyl-carrier-protein. The protein is Holo-[acyl-carrier-protein] synthase of Pectobacterium atrosepticum (strain SCRI 1043 / ATCC BAA-672) (Erwinia carotovora subsp. atroseptica).